The following is a 138-amino-acid chain: Basic phospholipase A2 vurtoxin (138 aa).

Residues 1–16 (MRTLWIVAVCLIGVEG) form the signal peptide. 7 cysteine pairs are disulfide-bonded: cysteine 42–cysteine 131, cysteine 44–cysteine 60, cysteine 59–cysteine 111, cysteine 65–cysteine 138, cysteine 66–cysteine 104, cysteine 73–cysteine 97, and cysteine 91–cysteine 102. Tyrosine 43, glycine 45, and glycine 47 together coordinate Ca(2+). Histidine 63 is an active-site residue. A Ca(2+)-binding site is contributed by aspartate 64. Aspartate 105 is an active-site residue.

Requires Ca(2+) as cofactor. Expressed by the venom gland.

Its subcellular location is the secreted. It catalyses the reaction a 1,2-diacyl-sn-glycero-3-phosphocholine + H2O = a 1-acyl-sn-glycero-3-phosphocholine + a fatty acid + H(+). Functionally, snake venom phospholipase A2 that may have a strong anticoagulant activity. Is able to suppress the acetylcholine (ACh)-evoked current mediated by alpha-7 (CHRNA7)-similar nAChRs in L.stagnalis neurons (IC(50)=10.5 uM) and to compete with alpha-bungarotoxin for binding to muscle- and alpha-7 neuronal nAChR types, as well as to AChBPs. In inhibition of alpha-bungarotoxin binding, this toxin is mostly active against T.californica nAChR (IC(50)=0.26 uM), it is moderately active against human alpha-7 nAChR (IC(50)=14 uM), and is not active against L.stagnalis and A.californica AChBP (IC(50)&gt;30 uM). The sequence is that of Basic phospholipase A2 vurtoxin from Vipera renardi (Steppe viper).